Consider the following 398-residue polypeptide: 1-deoxy-D-xylulose 5-phosphate reductoisomerase (398 aa).

5 residues coordinate NADPH: threonine 10, glycine 11, serine 12, isoleucine 13, and asparagine 124. Lysine 125 contributes to the 1-deoxy-D-xylulose 5-phosphate binding site. Glutamate 126 is a binding site for NADPH. Aspartate 150 is a binding site for Mn(2+). Residues serine 151, glutamate 152, serine 186, and histidine 209 each contribute to the 1-deoxy-D-xylulose 5-phosphate site. Glutamate 152 is a Mn(2+) binding site. Glycine 215 serves as a coordination point for NADPH. Residues serine 222, asparagine 227, lysine 228, and glutamate 231 each contribute to the 1-deoxy-D-xylulose 5-phosphate site. A Mn(2+)-binding site is contributed by glutamate 231.

Belongs to the DXR family. The cofactor is Mg(2+). Mn(2+) serves as cofactor.

It catalyses the reaction 2-C-methyl-D-erythritol 4-phosphate + NADP(+) = 1-deoxy-D-xylulose 5-phosphate + NADPH + H(+). It functions in the pathway isoprenoid biosynthesis; isopentenyl diphosphate biosynthesis via DXP pathway; isopentenyl diphosphate from 1-deoxy-D-xylulose 5-phosphate: step 1/6. In terms of biological role, catalyzes the NADPH-dependent rearrangement and reduction of 1-deoxy-D-xylulose-5-phosphate (DXP) to 2-C-methyl-D-erythritol 4-phosphate (MEP). The polypeptide is 1-deoxy-D-xylulose 5-phosphate reductoisomerase (Tolumonas auensis (strain DSM 9187 / NBRC 110442 / TA 4)).